The sequence spans 502 residues: MLHVNFTEEESLNTQALIVFIDDKLKLDSELINLDQQHHGLISKTIANKLQFTGKYGQIKIIPSVVKSGEVKYLVLAGLGSEEKLTEVKIEELGGKILQNVTNAKIATIGLKIKNRISNFTSSHVASLIASGALLASYRFDKYRTTLKEADKFVVESFEISTDNNAEATKLFEVKKLIAEGVFFTRDISNEPSNIKTPQIYAERIADILEELNVDVSILGEREMKNLGMGALLGVGQGSQNESKLVVMEYQGANKDAPYIALVGKGVIFDTGGISLKPSNNMHLMRYDMCGSAAVVGTMIAVASQELPVNIVGVVGLVENMPSGNAQRPGDVVTTMSGQTAEVLNTDAEGRLVLADAVWYAQEKFKPKCVIDVATLTGAIVVSLGPTYAGCFSNNDELADKLIKAGEEVNEKLWRMPLHEDYDAMINSDIADMANIGNVPGAAGSSTAAHFIKRFIQEGVEWAHLDIAGVANSNKPSSLGPKGAVGYGVRLLEKFIKENYEQ.

Residues Lys-265 and Asp-270 each coordinate Mn(2+). The active site involves Lys-277. Positions 288, 347, and 349 each coordinate Mn(2+). Residue Arg-351 is part of the active site.

This sequence belongs to the peptidase M17 family. It depends on Mn(2+) as a cofactor.

It is found in the cytoplasm. It catalyses the reaction Release of an N-terminal amino acid, Xaa-|-Yaa-, in which Xaa is preferably Leu, but may be other amino acids including Pro although not Arg or Lys, and Yaa may be Pro. Amino acid amides and methyl esters are also readily hydrolyzed, but rates on arylamides are exceedingly low.. The catalysed reaction is Release of an N-terminal amino acid, preferentially leucine, but not glutamic or aspartic acids.. In terms of biological role, presumably involved in the processing and regular turnover of intracellular proteins. Catalyzes the removal of unsubstituted N-terminal amino acids from various peptides. The protein is Probable cytosol aminopeptidase of Rickettsia bellii (strain RML369-C).